The sequence spans 229 residues: Flagellar L-ring protein (229 aa).

The signal sequence occupies residues 1–25; it reads MKQVRLLPSATVRAACAVAVAALAG. Cys26 carries N-palmitoyl cysteine lipidation. Cys26 carries the S-diacylglycerol cysteine lipid modification.

Belongs to the FlgH family. The basal body constitutes a major portion of the flagellar organelle and consists of four rings (L,P,S, and M) mounted on a central rod.

The protein localises to the cell outer membrane. The protein resides in the bacterial flagellum basal body. Functionally, assembles around the rod to form the L-ring and probably protects the motor/basal body from shearing forces during rotation. This chain is Flagellar L-ring protein, found in Burkholderia vietnamiensis (strain G4 / LMG 22486) (Burkholderia cepacia (strain R1808)).